A 108-amino-acid polypeptide reads, in one-letter code: Beta-defensin 126 (108 aa).

The signal sequence occupies residues 1-20; sequence MKSLLFTLAVFMLLAQLVSG. An in vitro binds to LPS, mediates antimicrobial activity and inhibits LPS-mediated inflammation region spans residues 21–63; that stretch reads NWYVKKCLNDVGICKKKCKPGEMHIKNGWATCGKQRDCCVPAD. 3 disulfide bridges follow: Cys27–Cys58, Cys34–Cys52, and Cys38–Cys59.

Belongs to the beta-defensin family. As to quaternary structure, homodimer or homooligomer; disulfide-linked. Post-translationally, O-glycosylated; glycans contain alpha(2,3)-linked sialic acids.

It is found in the secreted. Functionally, highly glycosylated atypical beta-defensin involved in several aspects of sperm function. Facilitates sperm transport in the female reproductive tract and contributes to sperm protection against immunodetection; both functions are probably implicating the negative surface charge provided by its O-linked oligosaccharides in the sperm glycocalyx. Involved in binding of sperm to oviductal epithelial cells to form a sperm reservoir until ovulation. Release from the sperm surface during capacitation and ovaluation by an elevation of oviductal fluid pH is unmasking other surface components and allows sperm to penetrate the cumulus matrix and bind to the zona pellucida of the oocyte. In vitro has antimicrobial activity and may inhibit LPS-mediated inflammation. This chain is Beta-defensin 126 (DEFB126), found in Pan troglodytes (Chimpanzee).